The sequence spans 413 residues: Hemolin (413 aa).

The signal sequence occupies residues 1-18 (MASKSLVVLSACIIIGSA). Ig-like C2-type domains follow at residues 25–112 (PVLK…RVIS), 122–211 (PAKT…GEVR), 233–322 (PQYL…LKVT), and 327–413 (PKYV…VQVN). 4 disulfide bridges follow: cysteine 46–cysteine 97, cysteine 140–cysteine 199, cysteine 252–cysteine 305, and cysteine 349–cysteine 395. N-linked (GlcNAc...) asparagine glycosylation is present at asparagine 283.

It belongs to the hemolin family. Expressed in larval bristles.

Its subcellular location is the secreted. Increased activity in presence of phospholipids (low concentrations) and calcium ions. Inhibited by PMSF. Not affected by EDTA and E-64. Its function is as follows. Bristle toxin involved in caterpillar defense by participating in hemorrhagic syndrome characterized by a consumptive coagulopathy. Exhibits procoagulant activity through selective factor X proteolytic activation. Activates factor X in a dose- and time-dependent manner but does not activate gamma-carboxyglutamic acid domainless factor X. Its activity does not depend on calcium ions. Also functions as a growth stimulator and an inhibitor of cellular death for endothelial cells. In vitro, increases proliferation of human umbilical vein endothelial cells (HUVEC) and inhibits the apoptosis induced by starvation. Also increases slightly the complement decay-accelerating factor (CD55), which protects cells from complement-mediated lysis. On the other hand, does not alter the release or expression of von Willebrand factor (VWF), tissue factor (F3), intercellular adhesion molecule-1 (ICAM1), interleukin-8 (CXCL8), and prostacyclin. Does not show fibrinolytic or fibrinogenolytic activities. The sequence is that of Hemolin from Lonomia obliqua (Moth).